Reading from the N-terminus, the 92-residue chain is Acylphosphatase (92 aa).

Residues 5–92 (RAHVFISGRV…GKEGIFTIVW (88 aa)) form the Acylphosphatase-like domain. Active-site residues include Arg20 and Asn38.

The protein belongs to the acylphosphatase family.

The catalysed reaction is an acyl phosphate + H2O = a carboxylate + phosphate + H(+). This is Acylphosphatase (acyP) from Chloroflexus aurantiacus (strain ATCC 29366 / DSM 635 / J-10-fl).